Here is a 461-residue protein sequence, read N- to C-terminus: Photosystem II CP43 reaction center protein (461 aa).

A propeptide spanning residues 1-2 (ME) is cleaved from the precursor. Position 3 is an N-acetylthreonine (Thr3). At Thr3 the chain carries Phosphothreonine. 5 helical membrane-spanning segments follow: residues 57–81 (LFEV…PHLA), 122–143 (LLGP…KDRN), 166–188 (KALY…RKIT), 243–263 (KPFA…LSYS), and 279–300 (WFNN…ASQA). Glu355 serves as a coordination point for [CaMn4O5] cluster. A helical transmembrane segment spans residues 435–459 (RARAAAAGFEKGIDRDFEPVLSMTP).

This sequence belongs to the PsbB/PsbC family. PsbC subfamily. PSII is composed of 1 copy each of membrane proteins PsbA, PsbB, PsbC, PsbD, PsbE, PsbF, PsbH, PsbI, PsbJ, PsbK, PsbL, PsbM, PsbT, PsbX, PsbY, PsbZ, Psb30/Ycf12, at least 3 peripheral proteins of the oxygen-evolving complex and a large number of cofactors. It forms dimeric complexes. Binds multiple chlorophylls and provides some of the ligands for the Ca-4Mn-5O cluster of the oxygen-evolving complex. It may also provide a ligand for a Cl- that is required for oxygen evolution. PSII binds additional chlorophylls, carotenoids and specific lipids. serves as cofactor.

It localises to the plastid. The protein resides in the chloroplast thylakoid membrane. One of the components of the core complex of photosystem II (PSII). It binds chlorophyll and helps catalyze the primary light-induced photochemical processes of PSII. PSII is a light-driven water:plastoquinone oxidoreductase, using light energy to abstract electrons from H(2)O, generating O(2) and a proton gradient subsequently used for ATP formation. This Gossypium barbadense (Sea Island cotton) protein is Photosystem II CP43 reaction center protein.